We begin with the raw amino-acid sequence, 355 residues long: Uroporphyrinogen decarboxylase (355 aa).

Substrate is bound by residues 27 to 31 (RQAGR), Phe46, Asp77, Tyr154, Thr209, and His328.

Belongs to the uroporphyrinogen decarboxylase family. In terms of assembly, homodimer.

It localises to the cytoplasm. It carries out the reaction uroporphyrinogen III + 4 H(+) = coproporphyrinogen III + 4 CO2. Its pathway is porphyrin-containing compound metabolism; protoporphyrin-IX biosynthesis; coproporphyrinogen-III from 5-aminolevulinate: step 4/4. Catalyzes the decarboxylation of four acetate groups of uroporphyrinogen-III to yield coproporphyrinogen-III. This is Uroporphyrinogen decarboxylase from Vibrio vulnificus (strain CMCP6).